We begin with the raw amino-acid sequence, 95 residues long: Orphan antitoxin ParD2 (95 aa).

Antitoxin component of a non-functional type II toxin-antitoxin (TA system). Does not neutralize the effect of any of the RelE or ParE toxins. The sequence is that of Orphan antitoxin ParD2 (parD2) from Caulobacter vibrioides (strain ATCC 19089 / CIP 103742 / CB 15) (Caulobacter crescentus).